We begin with the raw amino-acid sequence, 99 residues long: A-type ATP synthase subunit F (99 aa).

Belongs to the V-ATPase F subunit family. As to quaternary structure, has multiple subunits with at least A(3), B(3), C, D, E, F, H, I and proteolipid K(x).

It localises to the cell membrane. Component of the A-type ATP synthase that produces ATP from ADP in the presence of a proton gradient across the membrane. The protein is A-type ATP synthase subunit F of Methanothrix thermoacetophila (strain DSM 6194 / JCM 14653 / NBRC 101360 / PT) (Methanosaeta thermophila).